The chain runs to 488 residues: Glycogen synthase (488 aa).

An ADP-alpha-D-glucose-binding site is contributed by Lys17.

It belongs to the glycosyltransferase 1 family. Bacterial/plant glycogen synthase subfamily.

It carries out the reaction [(1-&gt;4)-alpha-D-glucosyl](n) + ADP-alpha-D-glucose = [(1-&gt;4)-alpha-D-glucosyl](n+1) + ADP + H(+). It participates in glycan biosynthesis; glycogen biosynthesis. Synthesizes alpha-1,4-glucan chains using ADP-glucose. This is Glycogen synthase from Nitratidesulfovibrio vulgaris (strain DSM 19637 / Miyazaki F) (Desulfovibrio vulgaris).